The following is a 105-amino-acid chain: uncharacterized protein (105 aa).

Belongs to the M.jannaschii MJ0023/MJ0349/MJ1072/MJ1074/MJ1107/MJECL16 family.

This is an uncharacterized protein from Methanocaldococcus jannaschii (strain ATCC 43067 / DSM 2661 / JAL-1 / JCM 10045 / NBRC 100440) (Methanococcus jannaschii).